The primary structure comprises 365 residues: Delta(7)-sterol 5(6)-desaturase ERG3 (365 aa).

The Cytoplasmic segment spans residues 1-92 (MDLVLEVADH…LLPRSSILRE (92 aa)). A helical membrane pass occupies residues 93-113 (FLSLWVIVTIFGLLLYLFTAS). Over 114–140 (LSYVFVFDKSIFNHPRYLKNQMAMEIK) the chain is Lumenal. A helical membrane pass occupies residues 141–161 (LAVSAIPWMSMLTVPWFVMEL). Over 162-242 (NGHSKLYMKI…VDGFLQSISY (81 aa)) the chain is Cytoplasmic. Residues 187 to 311 (TFIFFTDCGV…FTTLWDRLGG (125 aa)) form the Fatty acid hydroxylase domain. The Histidine box-1 motif lies at 200-204 (HRWLH). The short motif at 213–217 (HKPHH) is the Histidine box-2 element. A helical transmembrane segment spans residues 243–263 (HIYPLILPLHKVSYLILFTFV). Topologically, residues 264–365 (NFWTVMIHDG…ENDPNTKKNN (102 aa)) are lumenal. A Histidine box-3 motif is present at residues 288 to 292 (HTVHH). Residues Lys324 and Lys344 each participate in a glycyl lysine isopeptide (Lys-Gly) (interchain with G-Cter in ubiquitin) cross-link.

Belongs to the sterol desaturase family. As to quaternary structure, interacts with ERG28. Requires Fe cation as cofactor.

The protein localises to the endoplasmic reticulum membrane. The enzyme catalyses episterol + 2 Fe(II)-[cytochrome b5] + O2 + 2 H(+) = 5-dehydroepisterol + 2 Fe(III)-[cytochrome b5] + 2 H2O. Its pathway is steroid metabolism; ergosterol biosynthesis; ergosterol from zymosterol: step 3/5. Its function is as follows. C-5 sterol desaturase; part of the third module of ergosterol biosynthesis pathway that includes the late steps of the pathway. ERG3 catalyzes the introduction of a C-5 double bond in the B ring to produce 5-dehydroepisterol. The third module or late pathway involves the ergosterol synthesis itself through consecutive reactions that mainly occur in the endoplasmic reticulum (ER) membrane. Firstly, the squalene synthase ERG9 catalyzes the condensation of 2 farnesyl pyrophosphate moieties to form squalene, which is the precursor of all steroids. Squalene synthase is crucial for balancing the incorporation of farnesyl diphosphate (FPP) into sterol and nonsterol isoprene synthesis. Secondly, the squalene epoxidase ERG1 catalyzes the stereospecific oxidation of squalene to (S)-2,3-epoxysqualene, which is considered to be a rate-limiting enzyme in steroid biosynthesis. Then, the lanosterol synthase ERG7 catalyzes the cyclization of (S)-2,3 oxidosqualene to lanosterol, a reaction that forms the sterol core. In the next steps, lanosterol is transformed to zymosterol through a complex process involving various demethylation, reduction and desaturation reactions. The lanosterol 14-alpha-demethylase ERG11 (also known as CYP51) catalyzes C14-demethylation of lanosterol to produce 4,4'-dimethyl cholesta-8,14,24-triene-3-beta-ol, which is critical for ergosterol biosynthesis. The C-14 reductase ERG24 reduces the C14=C15 double bond of 4,4-dimethyl-cholesta-8,14,24-trienol to produce 4,4-dimethyl-cholesta-8,24-dienol. 4,4-dimethyl-cholesta-8,24-dienol is substrate of the C-4 demethylation complex ERG25-ERG26-ERG27 in which ERG25 catalyzes the three-step monooxygenation required for the demethylation of 4,4-dimethyl and 4alpha-methylsterols, ERG26 catalyzes the oxidative decarboxylation that results in a reduction of the 3-beta-hydroxy group at the C-3 carbon to an oxo group, and ERG27 is responsible for the reduction of the keto group on the C-3. ERG28 has a role as a scaffold to help anchor ERG25, ERG26 and ERG27 to the endoplasmic reticulum and ERG29 regulates the activity of the iron-containing C4-methylsterol oxidase ERG25. Then, the sterol 24-C-methyltransferase ERG6 catalyzes the methyl transfer from S-adenosyl-methionine to the C-24 of zymosterol to form fecosterol. The C-8 sterol isomerase ERG2 catalyzes the reaction which results in unsaturation at C-7 in the B ring of sterols and thus converts fecosterol to episterol. The sterol-C5-desaturase ERG3 then catalyzes the introduction of a C-5 double bond in the B ring to produce 5-dehydroepisterol. The C-22 sterol desaturase ERG5 further converts 5-dehydroepisterol into ergosta-5,7,22,24(28)-tetraen-3beta-ol by forming the C-22(23) double bond in the sterol side chain. Finally, ergosta-5,7,22,24(28)-tetraen-3beta-ol is substrate of the C-24(28) sterol reductase ERG4 to produce ergosterol. This chain is Delta(7)-sterol 5(6)-desaturase ERG3, found in Saccharomyces cerevisiae (strain ATCC 204508 / S288c) (Baker's yeast).